Reading from the N-terminus, the 300-residue chain is Ribosomal RNA small subunit methyltransferase H (300 aa).

Residues 35 to 37 (GGH), D55, F82, D100, and Q107 contribute to the S-adenosyl-L-methionine site.

The protein belongs to the methyltransferase superfamily. RsmH family.

Its subcellular location is the cytoplasm. It carries out the reaction cytidine(1402) in 16S rRNA + S-adenosyl-L-methionine = N(4)-methylcytidine(1402) in 16S rRNA + S-adenosyl-L-homocysteine + H(+). Functionally, specifically methylates the N4 position of cytidine in position 1402 (C1402) of 16S rRNA. The sequence is that of Ribosomal RNA small subunit methyltransferase H from Chlamydia trachomatis serovar A (strain ATCC VR-571B / DSM 19440 / HAR-13).